The chain runs to 394 residues: Elongation factor Tu (394 aa).

Residues 10–204 (RTHINVGTIG…ILDNYIPEPK (195 aa)) form the tr-type G domain. A G1 region spans residues 19-26 (GHVDHGKT). Position 19–26 (19–26 (GHVDHGKT)) interacts with GTP. Thr26 contributes to the Mg(2+) binding site. Residues 60 to 64 (GITIN) form a G2 region. The G3 stretch occupies residues 81–84 (DCPG). GTP contacts are provided by residues 81–85 (DCPGH) and 136–139 (NKCD). Residues 136–139 (NKCD) form a G4 region. Positions 174–176 (SAL) are G5.

It belongs to the TRAFAC class translation factor GTPase superfamily. Classic translation factor GTPase family. EF-Tu/EF-1A subfamily. As to quaternary structure, monomer.

It localises to the cytoplasm. It catalyses the reaction GTP + H2O = GDP + phosphate + H(+). Its function is as follows. GTP hydrolase that promotes the GTP-dependent binding of aminoacyl-tRNA to the A-site of ribosomes during protein biosynthesis. The polypeptide is Elongation factor Tu (Blochmanniella floridana).